Reading from the N-terminus, the 257-residue chain is Small ribosomal subunit protein uS2 (257 aa).

The segment at 229–257 (QFTPATTSSQEVDKASEQVEIAADDIDEE) is disordered.

It belongs to the universal ribosomal protein uS2 family.

This chain is Small ribosomal subunit protein uS2, found in Caldicellulosiruptor bescii (strain ATCC BAA-1888 / DSM 6725 / KCTC 15123 / Z-1320) (Anaerocellum thermophilum).